The chain runs to 68 residues: Large ribosomal subunit protein bL33c (68 aa).

Belongs to the bacterial ribosomal protein bL33 family.

The protein resides in the plastid. The sequence is that of Large ribosomal subunit protein bL33c from Cuscuta exaltata (Tall dodder).